The chain runs to 538 residues: Cytochrome P450 734A4 (538 aa).

Residues 5 to 27 traverse the membrane as a helical segment; the sequence is VAVAAAVLLLLHVAARVADAVWW. Residue Cys480 participates in heme binding.

Belongs to the cytochrome P450 family. The cofactor is heme. In terms of tissue distribution, expressed in roots, shoot apex, leaf sheaths, leaf blades, internodes and panicles.

It is found in the membrane. Cytochrome P450 involved in brassinosteroids (BRs) inactivation and regulation of BRs homeostasis. Is a multifunctional and multisubstrate enzyme that controls the endogenous bioactive BR content both by direct inactivation of castasterone (CS) and by decreasing the levels of BR precursors. Catalyzes the oxidation of carbon 22 hydroxylated BR intermediates to produce C26 oxidized metabolites. The chain is Cytochrome P450 734A4 (CYP734A4) from Oryza sativa subsp. japonica (Rice).